Reading from the N-terminus, the 180-residue chain is MSRLKKLYTEEIRKTLQEKFGYSNTMQIPVLKKIVISMGLAEAAKDKNLFQAHLDELSMISGQKPLVTKARNSIAGFKLREGQGIGAKVTLRGQRMYDFMDRFCHIVSPRIRDFRGFSSKGDGRGCYSLGLDDQQIFPEVDLDRVKRTQGMNITWVTTAQTDVECTTLLELMGLRFKKAQ.

Belongs to the universal ribosomal protein uL5 family. In terms of assembly, part of the 50S ribosomal subunit; part of the 5S rRNA/L5/L18/L25 subcomplex. Contacts the 5S rRNA and the P site tRNA. Forms a bridge to the 30S subunit in the 70S ribosome.

In terms of biological role, this is one of the proteins that bind and probably mediate the attachment of the 5S RNA into the large ribosomal subunit, where it forms part of the central protuberance. In the 70S ribosome it contacts protein S13 of the 30S subunit (bridge B1b), connecting the 2 subunits; this bridge is implicated in subunit movement. Contacts the P site tRNA; the 5S rRNA and some of its associated proteins might help stabilize positioning of ribosome-bound tRNAs. The sequence is that of Large ribosomal subunit protein uL5 from Chlamydia abortus (strain DSM 27085 / S26/3) (Chlamydophila abortus).